Here is a 247-residue protein sequence, read N- to C-terminus: tRNA pseudouridine synthase A 1 (247 aa).

Catalysis depends on aspartate 53, which acts as the Nucleophile. Tyrosine 111 provides a ligand contact to substrate.

The protein belongs to the tRNA pseudouridine synthase TruA family. As to quaternary structure, homodimer.

It catalyses the reaction uridine(38/39/40) in tRNA = pseudouridine(38/39/40) in tRNA. Functionally, formation of pseudouridine at positions 38, 39 and 40 in the anticodon stem and loop of transfer RNAs. This chain is tRNA pseudouridine synthase A 1, found in Bacillus cereus (strain ATCC 14579 / DSM 31 / CCUG 7414 / JCM 2152 / NBRC 15305 / NCIMB 9373 / NCTC 2599 / NRRL B-3711).